We begin with the raw amino-acid sequence, 84 residues long: MSWMFYSFIVFTLAIKEVIAIDGLEICSNDQLHVTIYSIFSPLFDKPKLNYYFNCSCPGSIYISDVYPKYFNDIAHIEYRCKLT.

The signal sequence occupies residues 1-16; that stretch reads MSWMFYSFIVFTLAIK.

It belongs to the scoloptoxin-11 family. Contains 2 disulfide bonds. In terms of tissue distribution, expressed by the venom gland.

The protein resides in the secreted. Functionally, inhibits voltage-gated potassium channel currents in DRG neurons. 200 nM of the toxin inhibits current amplitude by only 25% and even at concentrations up to 5 uM, the toxin does not inhibit all potassium currents. In vivo, insects injected with this toxin showed signs of neurotoxicity including twitching, paralysis, and body contraction. This chain is Kappa-scoloptoxin(11)-Ssm3a, found in Scolopendra mutilans (Chinese red-headed centipede).